We begin with the raw amino-acid sequence, 26 residues long: Neprilysin (26 aa).

Belongs to the peptidase M13 family. It depends on Zn(2+) as a cofactor.

It is found in the cell membrane. It carries out the reaction Preferential cleavage of polypeptides between hydrophobic residues, particularly with Phe or Tyr at P1'.. The enzyme catalyses substance P + H2O = substance P(1-9) + L-Leu-L-Met-NH2. The catalysed reaction is substance P + H2O = substance P(1-7) + L-Phe-Gly-L-Leu-L-Met-NH2. It catalyses the reaction neurotensin + H2O = neurotensin(1-11) + L-isoleucyl-L-leucine. It carries out the reaction neurotensin + H2O = neurotensin(1-10) + L-tyrosyl-L-isoleucyl-L-leucine. In terms of biological role, thermolysin-like specificity, but is almost confined on acting on polypeptides of up to 30 amino acids. Biologically important in the destruction of opioid peptides such as Met- and Leu-enkephalins by cleavage of a Gly-Phe bond. Catalyzes cleavage of bradykinin, substance P and neurotensin peptides. Able to cleave angiotensin-1, angiotensin-2 and angiotensin 1-9. Involved in the degradation of atrial natriuretic factor (ANF) and brain natriuretic factor (BNP(1-32)). Displays UV-inducible elastase activity toward skin preelastic and elastic fibers. This Sus scrofa (Pig) protein is Neprilysin (MME).